A 590-amino-acid chain; its full sequence is MGLYFRVRKSDASARLSELKTKSGTLILPEFFPVYNPNKPVITPREMSEMGIKAIITNSYLIYRSPELREAAIERGIHSLLGFDGVVMTDSGAYQIYRYGRVDVTNSEILRFQHSIGSDIGSILDVPMSSEIGREEAESGVERTIRNAEEWASMREELSNTLWVGTPQGSIYRDLVIKCSERIRELDFDYNGVGSIKVALEKYDFVTQVDHFMSIRSILRAGKPFHFWGIGHPSTFAFFAAIGADSFDSASYSLYAEQGRYMTPHGTLLLDEIEEFPCSCPVCSSHDPKEVKAMSKEERTKLLAKHNLYISISEIKKVREAIRGEWLWELVQERSRFHPNLYFALMHLLRRYSSLLEAREPLFKSSGLQCSGPESFLRPEVVRARNRLKYIHYNGKFRRVLYGDVPLGLKYLYPFGQTICPYDEEVQDEPEDDEIITCVLSYQYEFPFPKLPAIMRRSKSTGTLREVSLEGKVIGHFRPNDGAFIPTLDGASLILSHLPYPKGRVVVKGLFSDTVARGTTVFVKFVKEADPSIRPKSEVIVVNESDELLATGKAVLSGVEYHQYHPDHPFIIIRRHVKPRSEEKPPEVDS.

Asp-90 acts as the Nucleophile in catalysis. A substrate-binding site is contributed by Asp-125. Residues Cys-278, Cys-280, and Cys-283 each coordinate Zn(2+). In terms of domain architecture, PUA spans 502–577 (KGRVVVKGLF…HPFIIIRRHV (76 aa)).

The protein belongs to the archaeosine tRNA-ribosyltransferase family. It depends on Zn(2+) as a cofactor.

It carries out the reaction guanosine(15) in tRNA + 7-cyano-7-deazaguanine = 7-cyano-7-carbaguanosine(15) in tRNA + guanine. It functions in the pathway tRNA modification; archaeosine-tRNA biosynthesis. In terms of biological role, exchanges the guanine residue with 7-cyano-7-deazaguanine (preQ0) at position 15 in the dihydrouridine loop (D-loop) of archaeal tRNAs. This Korarchaeum cryptofilum (strain OPF8) protein is tRNA-guanine(15) transglycosylase.